The following is a 522-amino-acid chain: Subtilisin-like protease 10 (522 aa).

A signal peptide spans 1 to 19 (MFFFKGVVAVLSFFSAVNA). Positions 20–117 (APFMKPNNGT…VERDQIGTSQ (98 aa)) are excised as a propeptide. In terms of domain architecture, Inhibitor I9 spans 36 to 113 (SYIVLLKRDI…HVAHVERDQI (78 aa)). One can recognise a Peptidase S8 domain in the interval 127 to 405 (NWGLGRLSNS…KLLVNGANGT (279 aa)). Catalysis depends on charge relay system residues Asp-159 and His-190. An N-linked (GlcNAc...) asparagine glycan is attached at Asn-251. The active-site Charge relay system is the Ser-348. The span at 383 to 397 (SASVKNPGPNTTNKL) shows a compositional bias: polar residues. The tract at residues 383–515 (SASVKNPGPN…GWNRPMWWNR (133 aa)) is disordered. N-linked (GlcNAc...) asparagine glycans are attached at residues Asn-392 and Asn-403. A compositionally biased stretch (pro residues) spans 432–459 (SQNPPPGQNPPPGQNPPPEQPAPSPPAN).

It belongs to the peptidase S8 family.

The protein resides in the secreted. Its function is as follows. Secreted subtilisin-like serine protease with keratinolytic activity that contributes to pathogenicity. The protein is Subtilisin-like protease 10 (SUB10) of Trichophyton verrucosum (strain HKI 0517).